Here is a 776-residue protein sequence, read N- to C-terminus: Glucocorticoid receptor (776 aa).

Polar residues predominate over residues 1–11 (MDSKESLTSPS). Residues 1-25 (MDSKESLTSPSEEIPSSVHGQERGN) form a disordered region. The interval 1-419 (MDSKESLTSP…LSAVGPPPKF (419 aa)) is modulating. Thr8 carries the phosphothreonine modification. Omega-N-methylarginine is present on Arg23. Residues Ser45, Ser113, and Ser134 each carry the phosphoserine modification. Residues 157–178 (PETPSDVSSEQQNLKGQTGTNG) form a disordered region. Residues 161–174 (SDVSSEQQNLKGQT) are compositionally biased toward polar residues. 3 positions are modified to phosphoserine: Ser203, Ser211, and Ser226. Lys258 is covalently cross-linked (Glycyl lysine isopeptide (Lys-Gly) (interchain with G-Cter in SUMO2)). Ser267 carries the post-translational modification Phosphoserine. Glycyl lysine isopeptide (Lys-Gly) (interchain with G-Cter in SUMO); alternate cross-links involve residues Lys277 and Lys293. Residues Lys277 and Lys293 each participate in a glycyl lysine isopeptide (Lys-Gly) (interchain with G-Cter in SUMO2); alternate cross-link. Phosphoserine is present on residues Ser307 and Ser404. The segment at residues 417 to 492 (PKFCLVCSDE…AGMNLEARKT (76 aa)) is a DNA-binding region (nuclear receptor). Lys418 is covalently cross-linked (Glycyl lysine isopeptide (Lys-Gly) (interchain with G-Cter in ubiquitin)). 2 NR C4-type zinc fingers span residues 420 to 440 (CLVCSDEASGCHYGVLTCGSC) and 456 to 480 (CAGRNDCIIDKIRRKNCPACRYRKC). Residues Lys479, Lys491, Lys493, and Lys494 each carry the N6-acetyllysine modification. The interval 484–776 (GMNLEARKTK…NIKKLLFHQK (293 aa)) is interaction with CLOCK. Residues 486 to 522 (NLEARKTKKKIKGIQQTTTGISQETPENSANKTIVPA) form a hinge region. One can recognise an NR LBD domain in the interval 523-757 (TLPQLTPTPV…FPEMLAEIIT (235 aa)). The interval 531 to 696 (PVSLLEVIEP…EIRMTYIKEL (166 aa)) is interaction with CRY1. Residue Lys702 forms a Glycyl lysine isopeptide (Lys-Gly) (interchain with G-Cter in SUMO) linkage.

The protein belongs to the nuclear hormone receptor family. NR3 subfamily. In terms of assembly, heteromultimeric cytoplasmic complex with HSP90AA1, HSPA1A/HSPA1B, and FKBP5 or another immunophilin such as PPID, STIP1, or the immunophilin homolog PPP5C. Upon ligand binding FKBP5 dissociates from the complex and FKBP4 takes its place, thereby linking the complex to dynein and mediating transport to the nucleus, where the complex dissociates. Probably forms a complex composed of chaperones HSP90 and HSP70, co-chaperones CDC37, PPP5C, TSC1 and client protein TSC2, CDK4, AKT, RAF1 and NR3C1; this complex does not contain co-chaperones STIP1/HOP and PTGES3/p23. Directly interacts with UNC45A. Binds to DNA as a homodimer, and as heterodimer with NR3C2 or the retinoid X receptor. Binds STAT5A and STAT5B homodimers and heterodimers. Interacts with NRIP1, POU2F1, POU2F2 and TRIM28. Interacts with several coactivator complexes, including the SMARCA4 complex, CREBBP/EP300, TADA2L (Ada complex) and p160 coactivators such as NCOA2 and NCOA6. Interaction with BAG1 inhibits transactivation. Interacts with HEXIM1 and TGFB1I1. Interacts with NCOA1. Interacts with NCOA3, SMARCA4, SMARCC1, SMARCD1, and SMARCE1. Interacts with CLOCK, CRY1 and CRY2 in a ligand-dependent fashion. Interacts with CIART. Interacts with RWDD3. Interacts with UBE2I/UBC9 and this interaction is enhanced in the presence of RWDD3. Interacts with GRIP1. Interacts with NR4A3 (via nuclear receptor DNA-binding domain), represses transcription activity of NR4A3 on the POMC promoter Nur response element (NurRE). Directly interacts with PNRC2 to attract and form a complex with UPF1 and DCP1A; the interaction leads to rapid mRNA degradation. Interacts with GSK3B. Interacts with FNIP1 and FNIP2. Interacts (via C-terminus) with NR3C1 (via C-terminus). Interacts with MCM3AP. Interacts (via domain NR LBD) with HSP90AA1 and HSP90AB1. In the absence of hormonal ligand, interacts with TACC1. Acetylation by CLOCK reduces its binding to glucocorticoid response elements and its transcriptional activity. In terms of processing, increased proteasome-mediated degradation in response to glucocorticoids. Post-translationally, phosphorylated in the absence of hormone; becomes hyperphosphorylated in the presence of glucocorticoid. The Ser-203, Ser-226 and Ser-404-phosphorylated forms are mainly cytoplasmic, and the Ser-211-phosphorylated form is nuclear. Phosphorylation at Ser-211 increases transcriptional activity. Phosphorylation at Ser-203, Ser-226 and Ser-404 decreases signaling capacity. Phosphorylation at Ser-404 may protect from glucocorticoid-induced apoptosis. Phosphorylation at Ser-203 and Ser-211 is not required in regulation of chromosome segregation. May be dephosphorylated by PPP5C, attenuates NR3C1 action. Sumoylation at Lys-277 and Lys-293 negatively regulates its transcriptional activity. Sumoylation at Lys-702 positively regulates its transcriptional activity in the presence of RWDD3. Sumoylation at Lys-277 and Lys-293 is dispensable whereas sumoylation at Lys-702 is critical for the stimulatory effect of RWDD3 on its transcriptional activity. Heat shock increases sumoylation in a RWDD3-dependent manner. In terms of processing, ubiquitinated by UBR5, leading to its degradation: UBR5 specifically recognizes and binds ligand-bound NR3C1 when it is not associated with coactivators (NCOAs). In presence of NCOAs, the UBR5-degron is not accessible, preventing its ubiquitination and degradation.

The protein resides in the cytoplasm. It is found in the nucleus. Its subcellular location is the mitochondrion. It localises to the cytoskeleton. The protein localises to the spindle. The protein resides in the microtubule organizing center. It is found in the centrosome. Its subcellular location is the chromosome. It localises to the nucleoplasm. Receptor for glucocorticoids (GC). Has a dual mode of action: as a transcription factor that binds to glucocorticoid response elements (GRE), both for nuclear and mitochondrial DNA, and as a modulator of other transcription factors. Affects inflammatory responses, cellular proliferation and differentiation in target tissues. Involved in chromatin remodeling. Plays a role in rapid mRNA degradation by binding to the 5' UTR of target mRNAs and interacting with PNRC2 in a ligand-dependent manner which recruits the RNA helicase UPF1 and the mRNA-decapping enzyme DCP1A, leading to RNA decay. Could act as a coactivator for STAT5-dependent transcription upon growth hormone (GH) stimulation and could reveal an essential role of hepatic GR in the control of body growth. Mediates glucocorticoid-induced apoptosis. Promotes accurate chromosome segregation during mitosis. May act as a tumor suppressor. May play a negative role in adipogenesis through the regulation of lipolytic and antilipogenic gene expression. This is Glucocorticoid receptor (NR3C1) from Tupaia belangeri (Common tree shrew).